Consider the following 194-residue polypeptide: MLVPTVIEQTARGERAYDIYSRLLKDRIIMLSGDVNDQMANSIIAQLLFLDAQDNTKDIYMYINSPGGVITSGMAIVDTMNFIKSPVSTIATGMAASMASIILAEGEKGKRFALPHATVLIHQPLGGAQGQATEIQIAAEEILKTRKMINEILAKDSGQDIETIKRDTERDHYMTAQEAKDYGLIDDIMVNQNK.

S97 functions as the Nucleophile in the catalytic mechanism. H122 is an active-site residue.

The protein belongs to the peptidase S14 family. In terms of assembly, fourteen ClpP subunits assemble into 2 heptameric rings which stack back to back to give a disk-like structure with a central cavity, resembling the structure of eukaryotic proteasomes.

It localises to the cytoplasm. It catalyses the reaction Hydrolysis of proteins to small peptides in the presence of ATP and magnesium. alpha-casein is the usual test substrate. In the absence of ATP, only oligopeptides shorter than five residues are hydrolyzed (such as succinyl-Leu-Tyr-|-NHMec, and Leu-Tyr-Leu-|-Tyr-Trp, in which cleavage of the -Tyr-|-Leu- and -Tyr-|-Trp bonds also occurs).. In terms of biological role, cleaves peptides in various proteins in a process that requires ATP hydrolysis. Has a chymotrypsin-like activity. Plays a major role in the degradation of misfolded proteins. The chain is ATP-dependent Clp protease proteolytic subunit from Lactobacillus delbrueckii subsp. bulgaricus (strain ATCC BAA-365 / Lb-18).